We begin with the raw amino-acid sequence, 230 residues long: Thymidylate kinase (230 aa).

Residue 20–27 coordinates ATP; sequence GGEGAGKS.

It belongs to the thymidylate kinase family.

It catalyses the reaction dTMP + ATP = dTDP + ADP. Functionally, phosphorylation of dTMP to form dTDP in both de novo and salvage pathways of dTTP synthesis. The protein is Thymidylate kinase of Rhodopseudomonas palustris (strain BisB18).